We begin with the raw amino-acid sequence, 196 residues long: ATP-dependent Clp protease proteolytic subunit 1 (196 aa).

Ser-96 serves as the catalytic Nucleophile. His-121 is an active-site residue.

It belongs to the peptidase S14 family. In terms of assembly, fourteen ClpP subunits assemble into 2 heptameric rings which stack back to back to give a disk-like structure with a central cavity, resembling the structure of eukaryotic proteasomes.

Its subcellular location is the cytoplasm. The catalysed reaction is Hydrolysis of proteins to small peptides in the presence of ATP and magnesium. alpha-casein is the usual test substrate. In the absence of ATP, only oligopeptides shorter than five residues are hydrolyzed (such as succinyl-Leu-Tyr-|-NHMec, and Leu-Tyr-Leu-|-Tyr-Trp, in which cleavage of the -Tyr-|-Leu- and -Tyr-|-Trp bonds also occurs).. In terms of biological role, cleaves peptides in various proteins in a process that requires ATP hydrolysis. Has a chymotrypsin-like activity. Plays a major role in the degradation of misfolded proteins. The chain is ATP-dependent Clp protease proteolytic subunit 1 from Prochlorococcus marinus (strain NATL2A).